Reading from the N-terminus, the 279-residue chain is MRLPEELLERARDIHSEAPSHRIKLDRVGSFGLKVPVEFKGFLLLAEADVWVSLPEGRRGVDLSRQVEAIYELSNPPKDPFSLCREAAISLLEKLNYADSSGVSIRFDAPLQDGESLKYYGVEISSIASDEIINKIRVEILGMTACPCTAELIRAYKSSEIAATHTQRSLGILEVSTKAEHPDPDKLASIIERAMSSPLRTYTKRPDEGGLVIRSLSNARLAEDVVREMIHLFLEEFGHLPEDTHILAAVRSMESVHMHDIYAERSFSLDEIRKEISSH.

This sequence belongs to the GTP cyclohydrolase IV family. As to quaternary structure, homodimer. Fe(2+) is required as a cofactor.

The enzyme catalyses GTP + H2O = 7,8-dihydroneopterin 2',3'-cyclic phosphate + formate + diphosphate + H(+). The protein operates within cofactor biosynthesis; 5,6,7,8-tetrahydromethanopterin biosynthesis. Functionally, converts GTP to 7,8-dihydro-D-neopterin 2',3'-cyclic phosphate, the first intermediate in the biosynthesis of coenzyme methanopterin. This Korarchaeum cryptofilum (strain OPF8) protein is GTP cyclohydrolase MptA.